We begin with the raw amino-acid sequence, 214 residues long: 3,4-dihydroxy-2-butanone 4-phosphate synthase (214 aa).

D-ribulose 5-phosphate contacts are provided by residues 37–38 (RE), aspartate 42, 150–154 (RRGHT), and glutamate 174. Glutamate 38 is a Mg(2+) binding site. Histidine 153 serves as a coordination point for Mg(2+).

It belongs to the DHBP synthase family. Homodimer. Mg(2+) serves as cofactor. The cofactor is Mn(2+).

The enzyme catalyses D-ribulose 5-phosphate = (2S)-2-hydroxy-3-oxobutyl phosphate + formate + H(+). It functions in the pathway cofactor biosynthesis; riboflavin biosynthesis; 2-hydroxy-3-oxobutyl phosphate from D-ribulose 5-phosphate: step 1/1. Catalyzes the conversion of D-ribulose 5-phosphate to formate and 3,4-dihydroxy-2-butanone 4-phosphate. This Pasteurella multocida (strain Pm70) protein is 3,4-dihydroxy-2-butanone 4-phosphate synthase.